The primary structure comprises 293 residues: Delta(3,5)-Delta(2,4)-dienoyl-CoA isomerase, mitochondrial (293 aa).

Residues 84–88 (AGLNL) and G142 each bind substrate.

The protein belongs to the enoyl-CoA hydratase/isomerase family.

The protein resides in the mitochondrion. It catalyses the reaction (3E,5Z)-octadienoyl-CoA = (2E,4E)-octadienoyl-CoA. It carries out the reaction (3E,5Z,8Z,11Z,14Z)-eicosapentaenoyl-CoA = (2E,4E,8Z,11Z,14Z)-eicosapentaenoyl-CoA. It participates in lipid metabolism; fatty acid beta-oxidation. In terms of biological role, isomerization of 3-trans,5-cis-dienoyl-CoA to 2-trans,4-trans-dienoyl-CoA. This Dictyostelium discoideum (Social amoeba) protein is Delta(3,5)-Delta(2,4)-dienoyl-CoA isomerase, mitochondrial (ech1).